The primary structure comprises 443 residues: Probable glycine dehydrogenase (decarboxylating) subunit 1 (443 aa).

This sequence belongs to the GcvP family. N-terminal subunit subfamily. In terms of assembly, the glycine cleavage system is composed of four proteins: P, T, L and H. In this organism, the P 'protein' is a heterodimer of two subunits.

The catalysed reaction is N(6)-[(R)-lipoyl]-L-lysyl-[glycine-cleavage complex H protein] + glycine + H(+) = N(6)-[(R)-S(8)-aminomethyldihydrolipoyl]-L-lysyl-[glycine-cleavage complex H protein] + CO2. In terms of biological role, the glycine cleavage system catalyzes the degradation of glycine. The P protein binds the alpha-amino group of glycine through its pyridoxal phosphate cofactor; CO(2) is released and the remaining methylamine moiety is then transferred to the lipoamide cofactor of the H protein. This is Probable glycine dehydrogenase (decarboxylating) subunit 1 from Oleidesulfovibrio alaskensis (strain ATCC BAA-1058 / DSM 17464 / G20) (Desulfovibrio alaskensis).